A 132-amino-acid chain; its full sequence is Large ribosomal subunit protein uL24 (132 aa).

This sequence belongs to the universal ribosomal protein uL24 family. Part of the 50S ribosomal subunit.

One of two assembly initiator proteins, it binds directly to the 5'-end of the 23S rRNA, where it nucleates assembly of the 50S subunit. In terms of biological role, one of the proteins that surrounds the polypeptide exit tunnel on the outside of the subunit. This chain is Large ribosomal subunit protein uL24, found in Synechococcus sp. (strain JA-3-3Ab) (Cyanobacteria bacterium Yellowstone A-Prime).